The primary structure comprises 312 residues: D-alanine--D-alanine ligase (312 aa).

Residues 102–307 form the ATP-grasp domain; that stretch reads KKIFKMEGIP…FPELTDRLIK (206 aa). 136 to 191 contributes to the ATP binding site; that stretch reads IKEVGVPAVVKANTQGSTIGITFVHVKEKMAEAIESALKYDQDVLVEQFVAGTEVT. 3 residues coordinate Mg(2+): Asp-262, Glu-274, and Asn-276.

The protein belongs to the D-alanine--D-alanine ligase family. Mg(2+) serves as cofactor. Mn(2+) is required as a cofactor.

It is found in the cytoplasm. The enzyme catalyses 2 D-alanine + ATP = D-alanyl-D-alanine + ADP + phosphate + H(+). It participates in cell wall biogenesis; peptidoglycan biosynthesis. Functionally, cell wall formation. This Desulforamulus reducens (strain ATCC BAA-1160 / DSM 100696 / MI-1) (Desulfotomaculum reducens) protein is D-alanine--D-alanine ligase.